The sequence spans 189 residues: Coatomer subunit zeta (189 aa).

The protein belongs to the adaptor complexes small subunit family. In terms of assembly, oligomeric complex that consists of at least the alpha, beta, beta', gamma, delta, epsilon and zeta subunits.

It is found in the cytoplasm. The protein localises to the golgi apparatus membrane. The protein resides in the cytoplasmic vesicle. Its subcellular location is the COPI-coated vesicle membrane. Its function is as follows. The coatomer is a cytosolic protein complex that binds to dilysine motifs and reversibly associates with Golgi non-clathrin-coated vesicles, which further mediate biosynthetic protein transport from the ER, via the Golgi up to the trans Golgi network. Coatomer complex is required for budding from Golgi membranes, and is essential for the retrograde Golgi-to-ER transport of dilysine-tagged proteins. The zeta subunit may be involved in regulating the coat assembly and, hence, the rate of biosynthetic protein transport due to its association-dissociation properties with the coatomer complex. In Saccharomyces cerevisiae (strain ATCC 204508 / S288c) (Baker's yeast), this protein is Coatomer subunit zeta (RET3).